Here is a 296-residue protein sequence, read N- to C-terminus: Lipoyl synthase (296 aa).

[4Fe-4S] cluster is bound by residues Cys37, Cys42, Cys48, Cys63, Cys67, Cys70, and Ser276. The region spanning Trp49–Leu265 is the Radical SAM core domain.

This sequence belongs to the radical SAM superfamily. Lipoyl synthase family. [4Fe-4S] cluster is required as a cofactor.

It localises to the cytoplasm. It catalyses the reaction [[Fe-S] cluster scaffold protein carrying a second [4Fe-4S](2+) cluster] + N(6)-octanoyl-L-lysyl-[protein] + 2 oxidized [2Fe-2S]-[ferredoxin] + 2 S-adenosyl-L-methionine + 4 H(+) = [[Fe-S] cluster scaffold protein] + N(6)-[(R)-dihydrolipoyl]-L-lysyl-[protein] + 4 Fe(3+) + 2 hydrogen sulfide + 2 5'-deoxyadenosine + 2 L-methionine + 2 reduced [2Fe-2S]-[ferredoxin]. Its pathway is protein modification; protein lipoylation via endogenous pathway; protein N(6)-(lipoyl)lysine from octanoyl-[acyl-carrier-protein]: step 2/2. Its function is as follows. Catalyzes the radical-mediated insertion of two sulfur atoms into the C-6 and C-8 positions of the octanoyl moiety bound to the lipoyl domains of lipoate-dependent enzymes, thereby converting the octanoylated domains into lipoylated derivatives. The sequence is that of Lipoyl synthase from Rickettsia conorii (strain ATCC VR-613 / Malish 7).